Here is a 293-residue protein sequence, read N- to C-terminus: 33 kDa chaperonin (293 aa).

Intrachain disulfides connect cysteine 229–cysteine 231 and cysteine 262–cysteine 265.

This sequence belongs to the HSP33 family. In terms of processing, under oxidizing conditions two disulfide bonds are formed involving the reactive cysteines. Under reducing conditions zinc is bound to the reactive cysteines and the protein is inactive.

It localises to the cytoplasm. Functionally, redox regulated molecular chaperone. Protects both thermally unfolding and oxidatively damaged proteins from irreversible aggregation. Plays an important role in the bacterial defense system toward oxidative stress. The polypeptide is 33 kDa chaperonin (Methylobacillus flagellatus (strain ATCC 51484 / DSM 6875 / VKM B-1610 / KT)).